Consider the following 288-residue polypeptide: Pantothenate synthetase (288 aa).

31-38 (MGNLHRGH) lines the ATP pocket. H38 functions as the Proton donor in the catalytic mechanism. Q62 serves as a coordination point for (R)-pantoate. Q62 is a beta-alanine binding site. 150–153 (GQKD) contributes to the ATP binding site. Residue Q156 participates in (R)-pantoate binding. Residues I179 and 187 to 190 (LSSR) contribute to the ATP site.

The protein belongs to the pantothenate synthetase family. Homodimer.

The protein localises to the cytoplasm. It carries out the reaction (R)-pantoate + beta-alanine + ATP = (R)-pantothenate + AMP + diphosphate + H(+). It functions in the pathway cofactor biosynthesis; (R)-pantothenate biosynthesis; (R)-pantothenate from (R)-pantoate and beta-alanine: step 1/1. Functionally, catalyzes the condensation of pantoate with beta-alanine in an ATP-dependent reaction via a pantoyl-adenylate intermediate. The sequence is that of Pantothenate synthetase from Wigglesworthia glossinidia brevipalpis.